Here is a 382-residue protein sequence, read N- to C-terminus: GDSL esterase/lipase At4g01130 (382 aa).

The signal sequence occupies residues 1–28 (MASDINRRRSFSLLVLIIVMLYGHKGDS). Ser-41 acts as the Nucleophile in catalysis. Asn-118, Asn-263, Asn-275, and Asn-330 each carry an N-linked (GlcNAc...) asparagine glycan. Residues Asp-348 and His-351 contribute to the active site.

Belongs to the 'GDSL' lipolytic enzyme family.

It is found in the secreted. In Arabidopsis thaliana (Mouse-ear cress), this protein is GDSL esterase/lipase At4g01130.